Consider the following 471-residue polypeptide: Ribulose bisphosphate carboxylase large chain (471 aa).

The substrate site is built by Asn115 and Thr165. Lys167 functions as the Proton acceptor in the catalytic mechanism. Lys169 provides a ligand contact to substrate. Mg(2+)-binding residues include Lys193, Asp195, and Glu196. Lys193 carries the N6-carboxylysine modification. The active-site Proton acceptor is the His286. Residues Arg287, His319, and Ser371 each contribute to the substrate site.

It belongs to the RuBisCO large chain family. Type I subfamily. In terms of assembly, heterohexadecamer of 8 large chains and 8 small chains. Mg(2+) serves as cofactor.

The protein localises to the carboxysome. The catalysed reaction is 2 (2R)-3-phosphoglycerate + 2 H(+) = D-ribulose 1,5-bisphosphate + CO2 + H2O. It catalyses the reaction D-ribulose 1,5-bisphosphate + O2 = 2-phosphoglycolate + (2R)-3-phosphoglycerate + 2 H(+). RuBisCO catalyzes two reactions: the carboxylation of D-ribulose 1,5-bisphosphate, the primary event in carbon dioxide fixation, as well as the oxidative fragmentation of the pentose substrate in the photorespiration process. Both reactions occur simultaneously and in competition at the same active site. In Synechococcus sp. (strain WH7803), this protein is Ribulose bisphosphate carboxylase large chain.